Consider the following 218-residue polypeptide: Recombination protein RecR (218 aa).

The C4-type zinc finger occupies 56–71 (CRICCNISREEVCRIC). The Toprim domain maps to 79 to 195 (STICVVEEPK…VVSRLASGMP (117 aa)).

The protein belongs to the RecR family.

In terms of biological role, may play a role in DNA repair. It seems to be involved in an RecBC-independent recombinational process of DNA repair. It may act with RecF and RecO. The polypeptide is Recombination protein RecR (Corynebacterium diphtheriae (strain ATCC 700971 / NCTC 13129 / Biotype gravis)).